We begin with the raw amino-acid sequence, 178 residues long: Cytochrome b6-f complex iron-sulfur subunit (178 aa).

The helical transmembrane segment at 20-42 threads the bilayer; it reads LLTFGTVTGVALGALYPVAQYFT. Positions 71–161 constitute a Rieske domain; that stretch reads THPVGDRSLV…VSIEDDQVLV (91 aa). [2Fe-2S] cluster is bound by residues cysteine 107, histidine 109, cysteine 125, and histidine 128. Cysteine 112 and cysteine 127 are oxidised to a cystine.

It belongs to the Rieske iron-sulfur protein family. In terms of assembly, the 4 large subunits of the cytochrome b6-f complex are cytochrome b6, subunit IV (17 kDa polypeptide, PetD), cytochrome f and the Rieske protein, while the 4 small subunits are PetG, PetL, PetM and PetN. The complex functions as a dimer. [2Fe-2S] cluster is required as a cofactor.

It localises to the cellular thylakoid membrane. The catalysed reaction is 2 oxidized [plastocyanin] + a plastoquinol + 2 H(+)(in) = 2 reduced [plastocyanin] + a plastoquinone + 4 H(+)(out). Component of the cytochrome b6-f complex, which mediates electron transfer between photosystem II (PSII) and photosystem I (PSI), cyclic electron flow around PSI, and state transitions. The polypeptide is Cytochrome b6-f complex iron-sulfur subunit (Prochlorococcus marinus (strain NATL1A)).